The following is a 227-amino-acid chain: Lectin (227 aa).

The N-terminal stretch at methionine 1 to alanine 28 is a signal peptide. Residue glutamine 29 is modified to Pyrrolidone carboxylic acid. 4 Chitin-binding type-1 domains span residues glutamine 29–serine 70, serine 71–alanine 113, aspartate 114–proline 156, and glutamate 157–lysine 199. 16 disulfides stabilise this stretch: cysteine 31-cysteine 46, cysteine 40-cysteine 52, cysteine 45-cysteine 59, cysteine 63-cysteine 68, cysteine 74-cysteine 89, cysteine 83-cysteine 95, cysteine 88-cysteine 102, cysteine 106-cysteine 111, cysteine 117-cysteine 132, cysteine 126-cysteine 138, cysteine 131-cysteine 145, cysteine 149-cysteine 154, cysteine 160-cysteine 175, cysteine 169-cysteine 181, cysteine 174-cysteine 188, and cysteine 192-cysteine 197. Methionine 38 to cysteine 40 provides a ligand contact to substrate. Position 90–101 (serine 90–tyrosine 101) interacts with substrate. Residue serine 142–glutamate 143 coordinates substrate. The propeptide occupies aspartate 202 to valine 227. Asparagine 211 is a glycosylation site (N-linked (GlcNAc...) asparagine).

Its function is as follows. N-acetyl-D-glucosamine binding lectin. The chain is Lectin from Oryza sativa subsp. indica (Rice).